The following is a 449-amino-acid chain: Tubulin alpha-8 chain (449 aa).

The MREC motif motif lies at 1 to 4 (MREC). GTP contacts are provided by Gln-11, Glu-71, Ser-140, Gly-144, Thr-145, Thr-179, Asn-206, and Asn-228. Glu-71 contacts Mg(2+). Residue Glu-254 is part of the active site.

Belongs to the tubulin family. Dimer of alpha and beta chains. A typical microtubule is a hollow water-filled tube with an outer diameter of 25 nm and an inner diameter of 15 nM. Alpha-beta heterodimers associate head-to-tail to form protofilaments running lengthwise along the microtubule wall with the beta-tubulin subunit facing the microtubule plus end conferring a structural polarity. Microtubules usually have 13 protofilaments but different protofilament numbers can be found in some organisms and specialized cells. Mg(2+) serves as cofactor. Some glutamate residues at the C-terminus are polyglycylated, resulting in polyglycine chains on the gamma-carboxyl group. Glycylation is mainly limited to tubulin incorporated into axonemes (cilia and flagella) whereas glutamylation is prevalent in neuronal cells, centrioles, axonemes, and the mitotic spindle. Both modifications can coexist on the same protein on adjacent residues, and lowering polyglycylation levels increases polyglutamylation, and reciprocally. Cilia and flagella glycylation is required for their stability and maintenance. Flagella glycylation controls sperm motility. In terms of processing, some glutamate residues at the C-terminus are polyglutamylated, resulting in polyglutamate chains on the gamma-carboxyl group. Polyglutamylation plays a key role in microtubule severing by spastin (SPAST). SPAST preferentially recognizes and acts on microtubules decorated with short polyglutamate tails: severing activity by SPAST increases as the number of glutamates per tubulin rises from one to eight, but decreases beyond this glutamylation threshold. Glutamylation is also involved in cilia motility. Post-translationally, the C-terminal phenylalanine residue is cleaved by MATCAP1/KIAA0895L.

It is found in the cytoplasm. The protein localises to the cytoskeleton. It catalyses the reaction GTP + H2O = GDP + phosphate + H(+). Tubulin is the major constituent of microtubules, a cylinder consisting of laterally associated linear protofilaments composed of alpha- and beta-tubulin heterodimers. Microtubules grow by the addition of GTP-tubulin dimers to the microtubule end, where a stabilizing cap forms. Below the cap, tubulin dimers are in GDP-bound state, owing to GTPase activity of alpha-tubulin. This is Tubulin alpha-8 chain (Tuba8) from Rattus norvegicus (Rat).